The primary structure comprises 74 residues: Exodeoxyribonuclease 7 small subunit (74 aa).

This sequence belongs to the XseB family. Heterooligomer composed of large and small subunits.

It localises to the cytoplasm. It carries out the reaction Exonucleolytic cleavage in either 5'- to 3'- or 3'- to 5'-direction to yield nucleoside 5'-phosphates.. Functionally, bidirectionally degrades single-stranded DNA into large acid-insoluble oligonucleotides, which are then degraded further into small acid-soluble oligonucleotides. This is Exodeoxyribonuclease 7 small subunit from Leuconostoc citreum (strain KM20).